A 927-amino-acid chain; its full sequence is Solute carrier family 12 protein B0303.11 (927 aa).

Topologically, residues 1–23 are cytoplasmic; it reads MPSSTASSEDAPITSTAWMNWKD. The helical transmembrane segment at 24–44 threads the bilayer; sequence VFLKCVQPMLAVVLLLRFSSI. The Extracellular segment spans residues 45 to 53; sequence VDEAGFTTT. The helical transmembrane segment at 54 to 74 threads the bilayer; the sequence is IILVFFTFLVSLVTGWSACTV. The Cytoplasmic segment spans residues 75–95; that stretch reads VSRKSSEVGFVKTMLAYSSTE. Residues 96-116 form a helical membrane-spanning segment; it reads FAISFSIIYLFCLLVATSTFL. At 117–141 the chain is on the extracellular side; it reads TSAAEAVLHIFSTFSLELLDGATHD. A helical membrane pass occupies residues 142 to 159; that stretch reads LRLVSSVLSLITLALCMV. Residues 160-165 are Cytoplasmic-facing; sequence RNRNAR. Residues 166 to 186 traverse the membrane as a helical segment; it reads FVRTFIFALTCIAIALQLSSV. Over 187–212 the chain is Extracellular; sequence MFRYGEYQLRRVSDRNAMIPSPPNEE. The helical transmembrane segment at 213-233 threads the bilayer; it reads ISTIFAQLFPAAMCGLTILNI. Residues 234–244 are Cytoplasmic-facing; the sequence is GSKLQNTAPRG. Residues 245-265 traverse the membrane as a helical segment; that stretch reads ALIAIAVSACFYGAAAMLDYV. The Extracellular portion of the chain corresponds to 266–284; the sequence is EFFARTSTSNSTGSAEYNE. Asn275 carries an N-linked (GlcNAc...) asparagine glycan. A helical transmembrane segment spans residues 285–305; sequence FLSYIYTTVPMAIVITLACVL. Topologically, residues 306–345 are cytoplasmic; that stretch reads SAVSTLKYAAVILQSLGRSNQCRCILWLAKGFGERDIPIR. The helical transmembrane segment at 346-366 threads the bilayer; it reads CLLLLSTVQILVSAIGSYDIL. Cys367 is a topological domain (extracellular). The helical transmembrane segment at 368-388 threads the bilayer; that stretch reads IPTTVFYLFAYALFNFYVFLV. Residues 389-394 are Cytoplasmic-facing; it reads KLSDPE. A helical membrane pass occupies residues 395–415; sequence IPSPPTLLSLAISAACFIASL. Residues 416–419 are Extracellular-facing; that stretch reads YTNR. The chain crosses the membrane as a helical span at residues 420-440; the sequence is HLALFIASIFAISYCSLLYII. Residues 441–927 are Cytoplasmic-facing; that stretch reads RRERNEDGEE…SMSALRLKFP (487 aa).

Belongs to the SLC12A transporter family.

The protein resides in the cell membrane. The polypeptide is Solute carrier family 12 protein B0303.11 (Caenorhabditis elegans).